A 615-amino-acid polypeptide reads, in one-letter code: Sorting nexin-41 (615 aa).

The disordered stretch occupies residues 1–71 (MWNDEDNNPY…DEGDYVGQAN (71 aa)). The segment covering 42–53 (SHSSNPDISDFS) has biased composition (low complexity). The 118-residue stretch at 93–210 (PDMPILITDA…RFLDPNVSWS (118 aa)) folds into the PX domain. Arginine 127, serine 129, lysine 153, and arginine 176 together coordinate a 1,2-diacyl-sn-glycero-3-phospho-(1D-myo-inositol-3-phosphate). Disordered regions lie at residues 218-277 (ASSV…RFPP) and 432-504 (QYLN…RKTS). Polar residues-rich tracts occupy residues 252 to 263 (LKSTSGTSSSPN) and 434 to 446 (LNRT…TKQR). A compositionally biased stretch (low complexity) spans 447–456 (SLSTSSATSS).

This sequence belongs to the sorting nexin family.

It is found in the endosome membrane. The protein localises to the endomembrane system. Its function is as follows. May be required for cytoplasm to vacuole transport (Cvt) and pexophagy. The polypeptide is Sorting nexin-41 (snx41) (Emericella nidulans (strain FGSC A4 / ATCC 38163 / CBS 112.46 / NRRL 194 / M139) (Aspergillus nidulans)).